The sequence spans 945 residues: Translation initiation factor IF-2 (945 aa).

2 disordered regions span residues 52–80 (RSHG…DSSG) and 96–357 (MKRD…FQAP). The span at 153–175 (PEPEPIVEPEPEPEPEPEPEPQP) shows a compositional bias: acidic residues. Composition is skewed to basic and acidic residues over residues 215-283 (DEER…KEAA) and 294-310 (AKTE…RTAR). Positions 445-614 (PRAPVVTVMG…LLQAEVLELT (170 aa)) constitute a tr-type G domain. The interval 454 to 461 (GHVDHGKT) is G1. 454-461 (GHVDHGKT) lines the GTP pocket. The G2 stretch occupies residues 479–483 (GITQH). The G3 stretch occupies residues 500–503 (DTPG). Residues 500 to 504 (DTPGH) and 554 to 557 (NKID) contribute to the GTP site. The segment at 554-557 (NKID) is G4. Residues 590-592 (SAK) are G5.

It belongs to the TRAFAC class translation factor GTPase superfamily. Classic translation factor GTPase family. IF-2 subfamily.

The protein localises to the cytoplasm. Functionally, one of the essential components for the initiation of protein synthesis. Protects formylmethionyl-tRNA from spontaneous hydrolysis and promotes its binding to the 30S ribosomal subunits. Also involved in the hydrolysis of GTP during the formation of the 70S ribosomal complex. The chain is Translation initiation factor IF-2 from Aromatoleum aromaticum (strain DSM 19018 / LMG 30748 / EbN1) (Azoarcus sp. (strain EbN1)).